Here is a 369-residue protein sequence, read N- to C-terminus: uncharacterized protein (369 aa).

4 disordered regions span residues 1–42 (MRAA…NNNS), 60–107 (PSDL…KEDD), 146–177 (ALSM…NSSG), and 214–369 (LSSH…GDDD). The span at 12-24 (VGPNNNNQSNTIN) shows a compositional bias: polar residues. Low complexity-rich tracts occupy residues 30-42 (SNSN…NNNS) and 70-86 (YHSN…NSSS). Polar residues predominate over residues 87 to 101 (AITSGTVAPSSSMNN). Acidic residues predominate over residues 155–169 (DSESDISEKEDDNDG). The span at 219–324 (NNNNNSSNNN…NNNNNNSNIY (106 aa)) shows a compositional bias: low complexity.

This is an uncharacterized protein from Dictyostelium discoideum (Social amoeba).